Reading from the N-terminus, the 361-residue chain is Transposase A from transposon Tn554 (361 aa).

The 98-residue stretch at 23–120 folds into the Core-binding (CB) domain; it reads YQLIEPVMKF…VVMSFLDYLS (98 aa). In terms of domain architecture, Tyr recombinase spans 163–351; it reads KQIRTLRSKE…SDQDMKNEFN (189 aa). Active-site residues include Arg198, Lys232, His302, Arg305, and His328. Residue Tyr338 is the O-(3'-phospho-DNA)-tyrosine intermediate of the active site.

It belongs to the 'phage' integrase family.

Its function is as follows. One of three proteins encoded by transposon Tn554 required for its transposition. This Staphylococcus aureus (strain Mu50 / ATCC 700699) protein is Transposase A from transposon Tn554 (tnpA1).